Here is a 293-residue protein sequence, read N- to C-terminus: MTAQTQQSIMAKLALYAQLSRIDRPIGTLLLLWPCLMALLFAAKGMPDIKVLLIFILGVVIMRACGCIINDYADRNLDAHVERTKQRPLASGAISSKEALSLFALLGLLAFALVLLLNPLVVKLSVVGIVLTIMYPFMKRVTNMPQMFLGIVWSWSIPMAYAAQLGEVPVEAWWLFAANWCWTVAYDTMYAMIDRDDDLKVGIKSSAILFGRFDRQWIAVFQLMAFGCFLMAGLSAEREFIYALGLLGFIAFSVYQQRLIFSRERPACFKAFLNNNWVGMLLFLTLAADYLLY.

Helical transmembrane passes span 26-46 (IGTLLLLWPCLMALLFAAKGM), 49-69 (IKVLLIFILGVVIMRACGCII), 102-122 (LFALLGLLAFALVLLLNPLVV), 148-168 (FLGIVWSWSIPMAYAAQLGEV), 173-193 (WWLFAANWCWTVAYDTMYAMI), 217-237 (WIAVFQLMAFGCFLMAGLSAE), 240-260 (FIYALGLLGFIAFSVYQQRLI), and 272-292 (FLNNNWVGMLLFLTLAADYLL).

This sequence belongs to the UbiA prenyltransferase family. Mg(2+) serves as cofactor.

The protein localises to the cell inner membrane. It carries out the reaction all-trans-octaprenyl diphosphate + 4-hydroxybenzoate = 4-hydroxy-3-(all-trans-octaprenyl)benzoate + diphosphate. The protein operates within cofactor biosynthesis; ubiquinone biosynthesis. Its function is as follows. Catalyzes the prenylation of para-hydroxybenzoate (PHB) with an all-trans polyprenyl group. Mediates the second step in the final reaction sequence of ubiquinone-8 (UQ-8) biosynthesis, which is the condensation of the polyisoprenoid side chain with PHB, generating the first membrane-bound Q intermediate 3-octaprenyl-4-hydroxybenzoate. This is 4-hydroxybenzoate octaprenyltransferase from Shewanella denitrificans (strain OS217 / ATCC BAA-1090 / DSM 15013).